We begin with the raw amino-acid sequence, 320 residues long: Ferrochelatase (320 aa).

His-194 and Glu-275 together coordinate Fe cation.

It belongs to the ferrochelatase family. As to quaternary structure, monomer.

The protein resides in the cytoplasm. The enzyme catalyses heme b + 2 H(+) = protoporphyrin IX + Fe(2+). The protein operates within porphyrin-containing compound metabolism; protoheme biosynthesis; protoheme from protoporphyrin-IX: step 1/1. In terms of biological role, catalyzes the ferrous insertion into protoporphyrin IX. The chain is Ferrochelatase from Escherichia coli O139:H28 (strain E24377A / ETEC).